The following is a 216-amino-acid chain: Cytidylate kinase (216 aa).

Residue Gly-7 to Thr-15 participates in ATP binding.

Belongs to the cytidylate kinase family. Type 1 subfamily.

The protein localises to the cytoplasm. It catalyses the reaction CMP + ATP = CDP + ADP. The catalysed reaction is dCMP + ATP = dCDP + ADP. The chain is Cytidylate kinase from Methylocella silvestris (strain DSM 15510 / CIP 108128 / LMG 27833 / NCIMB 13906 / BL2).